Here is a 397-residue protein sequence, read N- to C-terminus: Pectate lyase 2 (397 aa).

The signal sequence occupies residues 1 to 25 (MGIKQCCYILYFTLALVALLQPVRS). N-linked (GlcNAc...) asparagine glycosylation occurs at N37. A disulfide bridge connects residues C54 and C71. Ca(2+) contacts are provided by D194, D218, and D222. The active site involves R274.

It belongs to the polysaccharide lyase 1 family. Amb a subfamily. Monomer. The cofactor is Ca(2+). The N-terminus is blocked. Pollen and flowers.

It catalyses the reaction Eliminative cleavage of (1-&gt;4)-alpha-D-galacturonan to give oligosaccharides with 4-deoxy-alpha-D-galact-4-enuronosyl groups at their non-reducing ends.. It functions in the pathway glycan metabolism; pectin degradation; 2-dehydro-3-deoxy-D-gluconate from pectin: step 2/5. Its function is as follows. Has pectate lyase activity. The protein is Pectate lyase 2 of Ambrosia artemisiifolia (Common ragweed).